The following is a 529-amino-acid chain: Peptide chain release factor 3 (529 aa).

One can recognise a tr-type G domain in the interval 11-280 (SKRRTFAIIS…GLTDWAPAPL (270 aa)). GTP is bound by residues 20 to 27 (SHPDAGKT), 88 to 92 (DTPGH), and 142 to 145 (NKLD).

It belongs to the TRAFAC class translation factor GTPase superfamily. Classic translation factor GTPase family. PrfC subfamily.

It is found in the cytoplasm. Functionally, increases the formation of ribosomal termination complexes and stimulates activities of RF-1 and RF-2. It binds guanine nucleotides and has strong preference for UGA stop codons. It may interact directly with the ribosome. The stimulation of RF-1 and RF-2 is significantly reduced by GTP and GDP, but not by GMP. The polypeptide is Peptide chain release factor 3 (Vibrio vulnificus (strain YJ016)).